A 111-amino-acid polypeptide reads, in one-letter code: Large ribosomal subunit protein uL22 (111 aa).

The protein belongs to the universal ribosomal protein uL22 family. Part of the 50S ribosomal subunit.

This protein binds specifically to 23S rRNA; its binding is stimulated by other ribosomal proteins, e.g. L4, L17, and L20. It is important during the early stages of 50S assembly. It makes multiple contacts with different domains of the 23S rRNA in the assembled 50S subunit and ribosome. In terms of biological role, the globular domain of the protein is located near the polypeptide exit tunnel on the outside of the subunit, while an extended beta-hairpin is found that lines the wall of the exit tunnel in the center of the 70S ribosome. The polypeptide is Large ribosomal subunit protein uL22 (Xylella fastidiosa (strain M23)).